The sequence spans 117 residues: Large ribosomal subunit protein uL22 (117 aa).

Belongs to the universal ribosomal protein uL22 family. As to quaternary structure, part of the 50S ribosomal subunit.

Its function is as follows. This protein binds specifically to 23S rRNA; its binding is stimulated by other ribosomal proteins, e.g. L4, L17, and L20. It is important during the early stages of 50S assembly. It makes multiple contacts with different domains of the 23S rRNA in the assembled 50S subunit and ribosome. Functionally, the globular domain of the protein is located near the polypeptide exit tunnel on the outside of the subunit, while an extended beta-hairpin is found that lines the wall of the exit tunnel in the center of the 70S ribosome. This is Large ribosomal subunit protein uL22 from Staphylococcus aureus (strain USA300).